The following is a 158-amino-acid chain: Glutathione peroxidase homolog BsaA (158 aa).

Threonine 36 is a catalytic residue.

Belongs to the glutathione peroxidase family.

The chain is Glutathione peroxidase homolog BsaA (bsaA) from Staphylococcus epidermidis (strain ATCC 35984 / DSM 28319 / BCRC 17069 / CCUG 31568 / BM 3577 / RP62A).